The sequence spans 221 residues: Small ribosomal subunit protein uS3 (221 aa).

In terms of domain architecture, KH type-2 spans leucine 39–arginine 107.

Belongs to the universal ribosomal protein uS3 family. In terms of assembly, part of the 30S ribosomal subunit. Forms a tight complex with proteins S10 and S14.

Functionally, binds the lower part of the 30S subunit head. Binds mRNA in the 70S ribosome, positioning it for translation. In Bdellovibrio bacteriovorus (strain ATCC 15356 / DSM 50701 / NCIMB 9529 / HD100), this protein is Small ribosomal subunit protein uS3.